Reading from the N-terminus, the 308-residue chain is uncharacterized protein (308 aa).

Residues L50, D90, N117, Y182, K186, I222, and T224 each contribute to the NADP(+) site. Y182 (proton acceptor) is an active-site residue. The active-site Lowers pKa of active site Tyr is K186.

It belongs to the short-chain dehydrogenases/reductases (SDR) family.

This is an uncharacterized protein from Saccharomyces cerevisiae (strain ATCC 204508 / S288c) (Baker's yeast).